The chain runs to 429 residues: Glutamate-1-semialdehyde 2,1-aminomutase 2 (429 aa).

Lysine 268 bears the N6-(pyridoxal phosphate)lysine mark.

The protein belongs to the class-III pyridoxal-phosphate-dependent aminotransferase family. HemL subfamily. In terms of assembly, homodimer. It depends on pyridoxal 5'-phosphate as a cofactor.

The protein resides in the cytoplasm. The catalysed reaction is (S)-4-amino-5-oxopentanoate = 5-aminolevulinate. The protein operates within porphyrin-containing compound metabolism; protoporphyrin-IX biosynthesis; 5-aminolevulinate from L-glutamyl-tRNA(Glu): step 2/2. This is Glutamate-1-semialdehyde 2,1-aminomutase 2 from Listeria monocytogenes serotype 4a (strain HCC23).